A 482-amino-acid polypeptide reads, in one-letter code: tRNA sulfurtransferase (482 aa).

The THUMP domain occupies Leu61–Arg165. Residues Leu183–Ile184, Lys265, Gly287, and Gln296 contribute to the ATP site. A disulfide bond links Cys344 and Cys456. In terms of domain architecture, Rhodanese spans Phe404–Pro482. Cys456 serves as the catalytic Cysteine persulfide intermediate.

Belongs to the ThiI family.

The protein resides in the cytoplasm. It carries out the reaction [ThiI sulfur-carrier protein]-S-sulfanyl-L-cysteine + a uridine in tRNA + 2 reduced [2Fe-2S]-[ferredoxin] + ATP + H(+) = [ThiI sulfur-carrier protein]-L-cysteine + a 4-thiouridine in tRNA + 2 oxidized [2Fe-2S]-[ferredoxin] + AMP + diphosphate. It catalyses the reaction [ThiS sulfur-carrier protein]-C-terminal Gly-Gly-AMP + S-sulfanyl-L-cysteinyl-[cysteine desulfurase] + AH2 = [ThiS sulfur-carrier protein]-C-terminal-Gly-aminoethanethioate + L-cysteinyl-[cysteine desulfurase] + A + AMP + 2 H(+). It functions in the pathway cofactor biosynthesis; thiamine diphosphate biosynthesis. Functionally, catalyzes the ATP-dependent transfer of a sulfur to tRNA to produce 4-thiouridine in position 8 of tRNAs, which functions as a near-UV photosensor. Also catalyzes the transfer of sulfur to the sulfur carrier protein ThiS, forming ThiS-thiocarboxylate. This is a step in the synthesis of thiazole, in the thiamine biosynthesis pathway. The sulfur is donated as persulfide by IscS. The sequence is that of tRNA sulfurtransferase from Salmonella typhi.